A 468-amino-acid chain; its full sequence is Probable serine/threonine-protein phosphatase 2A activator 2 (468 aa).

Residues 412 to 424 (STTTNNNNNNITS) show a composition bias toward low complexity. The segment at 412–468 (STTTNNNNNNITSGDHCNDNEQQCSETHNHDHNHNHNHNHNHPPPPPQQQRSYFPLD) is disordered.

The protein belongs to the PTPA-type PPIase family.

It localises to the cytoplasm. It catalyses the reaction [protein]-peptidylproline (omega=180) = [protein]-peptidylproline (omega=0). In terms of biological role, PPIases accelerate the folding of proteins. It catalyzes the cis-trans isomerization of proline imidic peptide bonds in oligopeptides. Acts as a regulatory subunit for PP2A-like phosphatases modulating their activity or substrate specificity, probably by inducing a conformational change in the catalytic subunit, a direct target of the PPIase. The sequence is that of Probable serine/threonine-protein phosphatase 2A activator 2 (ppp2r4B) from Dictyostelium discoideum (Social amoeba).